Here is a 503-residue protein sequence, read N- to C-terminus: Probable cytosol aminopeptidase (503 aa).

2 residues coordinate Mn(2+): Lys-271 and Asp-276. Lys-283 is a catalytic residue. Mn(2+) contacts are provided by Asp-294, Asp-353, and Glu-355. The active site involves Arg-357.

This sequence belongs to the peptidase M17 family. Mn(2+) is required as a cofactor.

The protein localises to the cytoplasm. It carries out the reaction Release of an N-terminal amino acid, Xaa-|-Yaa-, in which Xaa is preferably Leu, but may be other amino acids including Pro although not Arg or Lys, and Yaa may be Pro. Amino acid amides and methyl esters are also readily hydrolyzed, but rates on arylamides are exceedingly low.. The catalysed reaction is Release of an N-terminal amino acid, preferentially leucine, but not glutamic or aspartic acids.. Its function is as follows. Presumably involved in the processing and regular turnover of intracellular proteins. Catalyzes the removal of unsubstituted N-terminal amino acids from various peptides. The chain is Probable cytosol aminopeptidase from Chlorobium phaeobacteroides (strain DSM 266 / SMG 266 / 2430).